Consider the following 346-residue polypeptide: NADH-quinone oxidoreductase subunit H (346 aa).

Transmembrane regions (helical) follow at residues 13-33 (ILLILLQCLLLVVPLLVALAF), 51-71 (PNVVGAFGLLQSFADFLKYIV), 83-103 (AVYFLAPIVSLVMALIAWAVI), 116-136 (VAVLYVFAVSSLEVYGVIMGG), 162-182 (IGLIIIGVIISTGSMNFTAIV), 191-211 (LLNWYFLPHFPMLFLFFISAL), 244-264 (FMIGELVAVVLMCALTVLLFF), 278-298 (VFWMILKMLAVFFMFSMVKAI), and 310-330 (LGWKVFLPFSLFWVVFVAFMA).

Belongs to the complex I subunit 1 family. NDH-1 is composed of 14 different subunits. Subunits NuoA, H, J, K, L, M, N constitute the membrane sector of the complex.

It is found in the cell inner membrane. The enzyme catalyses a quinone + NADH + 5 H(+)(in) = a quinol + NAD(+) + 4 H(+)(out). In terms of biological role, NDH-1 shuttles electrons from NADH, via FMN and iron-sulfur (Fe-S) centers, to quinones in the respiratory chain. The immediate electron acceptor for the enzyme in this species is believed to be ubiquinone. Couples the redox reaction to proton translocation (for every two electrons transferred, four hydrogen ions are translocated across the cytoplasmic membrane), and thus conserves the redox energy in a proton gradient. This subunit may bind ubiquinone. This chain is NADH-quinone oxidoreductase subunit H, found in Jannaschia sp. (strain CCS1).